Here is a 108-residue protein sequence, read N- to C-terminus: Nucleoid-associated protein BH02310 (108 aa).

This sequence belongs to the YbaB/EbfC family. In terms of assembly, homodimer.

The protein localises to the cytoplasm. Its subcellular location is the nucleoid. Functionally, binds to DNA and alters its conformation. May be involved in regulation of gene expression, nucleoid organization and DNA protection. This Bartonella henselae (strain ATCC 49882 / DSM 28221 / CCUG 30454 / Houston 1) (Rochalimaea henselae) protein is Nucleoid-associated protein BH02310.